Here is a 230-residue protein sequence, read N- to C-terminus: Sugar fermentation stimulation protein homolog (230 aa).

Belongs to the SfsA family.

This chain is Sugar fermentation stimulation protein homolog, found in Clostridium perfringens (strain SM101 / Type A).